A 49-amino-acid polypeptide reads, in one-letter code: Large ribosomal subunit protein bL33 (49 aa).

It belongs to the bacterial ribosomal protein bL33 family.

The sequence is that of Large ribosomal subunit protein bL33 from Clostridium beijerinckii (strain ATCC 51743 / NCIMB 8052) (Clostridium acetobutylicum).